A 369-amino-acid chain; its full sequence is 3-dehydroquinate synthase (369 aa).

NAD(+) contacts are provided by residues 80-85 (DGEQYK), 114-118 (GVIGD), 138-139 (TT), Lys151, Lys160, and 178-181 (TLKT). Zn(2+) is bound by residues Glu193, His256, and His273.

This sequence belongs to the sugar phosphate cyclases superfamily. Dehydroquinate synthase family. Co(2+) serves as cofactor. The cofactor is Zn(2+). Requires NAD(+) as cofactor.

It localises to the cytoplasm. It catalyses the reaction 7-phospho-2-dehydro-3-deoxy-D-arabino-heptonate = 3-dehydroquinate + phosphate. It participates in metabolic intermediate biosynthesis; chorismate biosynthesis; chorismate from D-erythrose 4-phosphate and phosphoenolpyruvate: step 2/7. Catalyzes the conversion of 3-deoxy-D-arabino-heptulosonate 7-phosphate (DAHP) to dehydroquinate (DHQ). The chain is 3-dehydroquinate synthase from Psychrobacter cryohalolentis (strain ATCC BAA-1226 / DSM 17306 / VKM B-2378 / K5).